We begin with the raw amino-acid sequence, 294 residues long: MASFRRFRLLSPLKPCVTFGRMLYTRIDKDGLTMLAGHLAYVSLLSLVPLITVIFALFAAFPMFAEISIKLKAFIFANFIPATGDIIQNYLEQFVANSNRMTVVGTCGLIVTALLLIYSVDSVLNIIWRSKIQRSLVFSFAVYWMVLTLGPILVGASMVISSYLLSLHWLAHARVDSMIDEILRVFPLLISWVSFWLLYSVVPTVRVPARDALIGALVAALLFELGKKGFAMYITLFPSYQLIYGVLAVIPILFLWVYWSWCIVLLGAEITVTLGEYRAERHHAKSVITQSPEM.

The next 7 helical transmembrane spans lie at 44–64, 67–87, 108–128, 136–156, 185–205, 212–232, and 246–266; these read LLSLVPLITVIFALFAAFPMF, ISIKLKAFIFANFIPATGDII, GLIVTALLLIYSVDSVLNIIW, LVFSFAVYWMVLTLGPILVGA, VFPLLISWVSFWLLYSVVPTV, ALIGALVAALLFELGKKGFAM, and VLAVIPILFLWVYWSWCIVLL.

The protein belongs to the UPF0761 family.

The protein resides in the cell inner membrane. In Yersinia pseudotuberculosis serotype IB (strain PB1/+), this protein is UPF0761 membrane protein YPTS_0028.